The following is a 131-amino-acid chain: uncharacterized protein (131 aa).

This is an uncharacterized protein from Schizosaccharomyces pombe (strain 972 / ATCC 24843) (Fission yeast).